A 427-amino-acid polypeptide reads, in one-letter code: MPSIEAVGAREILDSRGNPTVEVEVVLEDGTLGRAAVPSGASTGAFEAVELRDGGDRYGGKGVTKAVEAVIGRIGPAIMELEATEQRLLDATLIDLDGTPGKSALGANALLGVSLAVAKAAAASSGLPLFRYLGGPSAHLLPVPMMNILNGGAHADTNVDIQEFMIAPIGAGTFAESLRWGAEIYQALKSVLKGRGLATGVGDEGGFAPSLPTNREALDLIAEAIDKAGFGLGDDIALALDVASTEFFADGSYTFEGSGRSAEQMIDYYADLVDSYPIVSIEDPLAEDDWAGWTSITTRLGARVQLVGDDLFVTNPERLARGIAEGAANALLVKVNQIGTLTETLDAVNLAHRSGYRCMMSHRSGETEDTTIADLAVAVDCGQIKTGAPARSERVAKYNQLLRIEEELDDAARYAGAGAFPRRTTTG.

Glutamine 162 lines the (2R)-2-phosphoglycerate pocket. Catalysis depends on glutamate 204, which acts as the Proton donor. The Mg(2+) site is built by aspartate 241, glutamate 282, and aspartate 309. Lysine 334, arginine 363, serine 364, and lysine 385 together coordinate (2R)-2-phosphoglycerate. The Proton acceptor role is filled by lysine 334.

This sequence belongs to the enolase family. Mg(2+) serves as cofactor.

The protein localises to the cytoplasm. It localises to the secreted. The protein resides in the cell surface. It carries out the reaction (2R)-2-phosphoglycerate = phosphoenolpyruvate + H2O. It participates in carbohydrate degradation; glycolysis; pyruvate from D-glyceraldehyde 3-phosphate: step 4/5. Functionally, catalyzes the reversible conversion of 2-phosphoglycerate (2-PG) into phosphoenolpyruvate (PEP). It is essential for the degradation of carbohydrates via glycolysis. The chain is Enolase from Parafrankia sp. (strain EAN1pec).